The following is a 262-amino-acid chain: ATP synthase subunit a (262 aa).

A run of 6 helical transmembrane segments spans residues 50 to 70 (TMIM…ACTK), 107 to 127 (MMPI…LGLI), 141 to 161 (FGLA…ANGV), 194 to 214 (LYGN…LINI), 218 to 238 (VFGG…VGFV), and 239 to 259 (QAFV…AHEA).

The protein belongs to the ATPase A chain family. As to quaternary structure, F-type ATPases have 2 components, CF(1) - the catalytic core - and CF(0) - the membrane proton channel. CF(1) has five subunits: alpha(3), beta(3), gamma(1), delta(1), epsilon(1). CF(0) has three main subunits: a(1), b(2) and c(9-12). The alpha and beta chains form an alternating ring which encloses part of the gamma chain. CF(1) is attached to CF(0) by a central stalk formed by the gamma and epsilon chains, while a peripheral stalk is formed by the delta and b chains.

Its subcellular location is the cell membrane. Its function is as follows. Key component of the proton channel; it plays a direct role in the translocation of protons across the membrane. The protein is ATP synthase subunit a of Desulforamulus reducens (strain ATCC BAA-1160 / DSM 100696 / MI-1) (Desulfotomaculum reducens).